The sequence spans 127 residues: C-C motif chemokine 28 (127 aa).

Positions 1–19 are cleaved as a signal peptide; that stretch reads MQQRGLAIVALAVCAALHA. 2 cysteine pairs are disulfide-bonded: Cys30–Cys58 and Cys31–Cys73. N-linked (GlcNAc...) asparagine glycosylation is present at Asn78. Over residues 92–115 the composition is skewed to basic residues; the sequence is KNGKGNVCHRKKHHGKRNSNRAHQ. The disordered stretch occupies residues 92–127; it reads KNGKGNVCHRKKHHGKRNSNRAHQGKHETYGHKTPY. Residues 116-127 show a composition bias toward basic and acidic residues; it reads GKHETYGHKTPY.

Belongs to the intercrine beta (chemokine CC) family. Preferentially expressed by epithelial cells of diverse tissues including normal and pathological colon, salivary gland, mammary gland, trachea and rectum. Also found in prostate, spleen, thyroid, psoriasis skin and in lower levels in peripheral blood leukocytes, small intestine, Peyer patches, stomach and normal skin.

The protein resides in the secreted. Its function is as follows. Chemotactic activity for resting CD4, CD8 T-cells and eosinophils. Binds to CCR3 and CCR10 and induces calcium mobilization in a dose-dependent manner. This Homo sapiens (Human) protein is C-C motif chemokine 28 (CCL28).